Reading from the N-terminus, the 240-residue chain is 7-cyano-7-deazaguanine synthase (240 aa).

ATP is bound at residue 18-28 (FSGGQDSTTCL). Residues cysteine 197, cysteine 206, cysteine 209, and cysteine 212 each coordinate Zn(2+).

The protein belongs to the QueC family. Zn(2+) is required as a cofactor.

The catalysed reaction is 7-carboxy-7-deazaguanine + NH4(+) + ATP = 7-cyano-7-deazaguanine + ADP + phosphate + H2O + H(+). It participates in purine metabolism; 7-cyano-7-deazaguanine biosynthesis. Functionally, catalyzes the ATP-dependent conversion of 7-carboxy-7-deazaguanine (CDG) to 7-cyano-7-deazaguanine (preQ(0)). This is 7-cyano-7-deazaguanine synthase from Shewanella baltica (strain OS223).